The sequence spans 905 residues: MVGLGVFARKFFGSAHERRLKVLRKKAEQINVLEEQFQKLSDTQLCKKTDEFRKRLVEGETVDLLLPEAFATVREAAKRVYDMRPFDVQLIGGMVLHDCGIAEMRTGEGKTLMATLPIYLNALEGKGVHVVTVNDYLANRDAETMGKIFGFLGLTTGVILHDLDSDARRAAYACDITYATNNELGFDYLRDNMAFDRSQMVQRGHHYAIVDEVDSILIDEARTPLIISGPLEDRTDFYNLIDTFIPALTPEDYEIDEKQKTTTFTEVGTEKIEKMLEQAGHLKGESLYDIENVAIVHHINNALKAHKLFVRDKDYIVRNGEIVIIDEFTGRMMPGRRYSEGLHQALEAKEHVAIQPENQTLASITFQNYFRMYRKLSGMTGTAITEAEEFSNIYGLDVIEVPTNLPIQRRDEDDEIYRTAEEKYRAIVRDIRQAHEKRQPILVGTTSIEKSEQLAERLRKEGITNFRVLNARYHEQEAYIIAQAGVPGAVTIATNMAGRGTDIQLGGNIEMRIRQELQDMPEGLERTAKIEEIKKDVKQLKEKALAAGGLYVIATERHESRRIDNQLRGRSGRQGDPGRSKFFLSLQDDLMRIFGSNRMDGMLQKLGLKENEAIIHPWINKAIEKAQKKVEARNFEIRKNLLKYDDVMNDQRKVIFEQRMEIMNAEDLTEMILEMRNEVVEDLVETYIPSGTYCEKWDITALQEELHQLFNLELPIETWAKEDGIAEEQILERISNAVTKLENERIERFSPEVMAYFHKAVLLETIDTLWREHLVHLDHLRSVVGFRGYAQRDPLNEYKTESFELFQAMLRNLRRIVTSKLMRFEIIQQPIEPRIPEQTDVGDPILNDQNKKNSSTLWTPSQENKFVNPKDRNPSDSTTWGKVGRNERCPCGSEKKYKHCHGAFV.

Residues Gln89, 107–111, and Asp502 each bind ATP; that span reads GEGKT. Residues 837–885 form a disordered region; it reads EQTDVGDPILNDQNKKNSSTLWTPSQENKFVNPKDRNPSDSTTWGKVGR. The span at 852 to 865 shows a compositional bias: polar residues; sequence KNSSTLWTPSQENK. The Zn(2+) site is built by Cys889, Cys891, Cys900, and His901.

The protein belongs to the SecA family. As to quaternary structure, monomer and homodimer. Part of the essential Sec protein translocation apparatus which comprises SecA, SecYEG and auxiliary proteins SecDF-YajC and YidC. Requires Zn(2+) as cofactor.

The protein resides in the cell inner membrane. It is found in the cytoplasm. The enzyme catalyses ATP + H2O + cellular proteinSide 1 = ADP + phosphate + cellular proteinSide 2.. In terms of biological role, part of the Sec protein translocase complex. Interacts with the SecYEG preprotein conducting channel. Has a central role in coupling the hydrolysis of ATP to the transfer of proteins into and across the cell membrane, serving both as a receptor for the preprotein-SecB complex and as an ATP-driven molecular motor driving the stepwise translocation of polypeptide chains across the membrane. The sequence is that of Protein translocase subunit SecA from Bartonella henselae (strain ATCC 49882 / DSM 28221 / CCUG 30454 / Houston 1) (Rochalimaea henselae).